The following is a 173-amino-acid chain: Transmembrane protein 278 (173 aa).

Acidic residues predominate over residues 1–14 (MSEQERETEEDEGV). The tract at residues 1 to 25 (MSEQERETEEDEGVASDTAPMLPRR) is disordered. 3 helical membrane-spanning segments follow: residues 31–51 (HISV…VLSG), 53–73 (ALVG…LVLL), and 107–127 (AALI…AAAA). The tract at residues 141–165 (DPARTPAPRRPPRSSGDLADGHPDE) is disordered.

It belongs to the TMEM88 family.

It is found in the membrane. The protein is Transmembrane protein 278 (Tmem278) of Mus musculus (Mouse).